The primary structure comprises 1096 residues: Cohesin subunit scc-3 (1096 aa).

The span at 1–21 (MSETPTDQSPQRMSTRNQARV) shows a compositional bias: polar residues. Disordered regions lie at residues 1 to 53 (MSET…KKRA) and 67 to 106 (NLNN…ESAE). Residues 261-312 (IELTQSKEKTSKQIEAEKAKLKNNSAGNEKYEALVAQRTQTEERAEEIRQII) adopt a coiled-coil conformation. The SCD domain maps to 320–405 (FVHRYRDVVP…NKFKDRLVSM (86 aa)). The disordered stretch occupies residues 1057-1096 (DNMSVRSGMTVTSNATMRSTASSTRGRGRGRGRSRIADDF). Polar residues predominate over residues 1060–1073 (SVRSGMTVTSNATM).

Belongs to the SCC3 family. In terms of assembly, component of the cohesin complex, composed of the smc-1 and smc-3 heterodimer attached via their hinge domain, scc-1 which links them, and scc-3. Interacts with scc-1, smc-1 and tim-1. As to expression, expressed in gonadal cells.

It localises to the nucleus. The protein resides in the chromosome. Component of the cohesin complex, a complex required for the cohesion of sister chromatids after DNA replication. The cohesin complex apparently forms a large proteinaceous ring within which sister chromatids can be trapped. At anaphase, the scc-1 subunit of the complex is cleaved and dissociates from chromatin, allowing sister chromatids to segregate. The cohesin complex may also play a role in spindle pole assembly during mitosis. Plays an essential role in cell division during embryonic development. Required for the assembly of the synaptonemal complex between homologous chromosomes to promote sister chromatid cohesion during mitosis and meiosis. Has a role in stabilization of homologous chromosome associations during meiotic synapsis. Required for chromosome segregation during mitosis and meiosis. Plays a role in DNA double-strand break (DSB) repair during meiotic recombination and promotes the assembly of the 9-1-1 cell-cycle checkpoint response complex which is required for inducing apoptosis in response to DNA damage, at DNA damage sites. This chain is Cohesin subunit scc-3, found in Caenorhabditis elegans.